Reading from the N-terminus, the 63-residue chain is Small ribosomal subunit protein eS17 (63 aa).

The protein belongs to the eukaryotic ribosomal protein eS17 family.

The polypeptide is Small ribosomal subunit protein eS17 (Methanococcus maripaludis (strain DSM 14266 / JCM 13030 / NBRC 101832 / S2 / LL)).